The primary structure comprises 115 residues: NADH-ubiquinone oxidoreductase chain 3 (115 aa).

3 helical membrane-spanning segments follow: residues 3–23, 55–75, and 84–104; these read VMLT…IAFW, FFLV…LLPL, and LTTM…SLAY.

The protein belongs to the complex I subunit 3 family. As to quaternary structure, core subunit of respiratory chain NADH dehydrogenase (Complex I) which is composed of 45 different subunits. Interacts with TMEM186. Interacts with TMEM242.

The protein localises to the mitochondrion inner membrane. The enzyme catalyses a ubiquinone + NADH + 5 H(+)(in) = a ubiquinol + NAD(+) + 4 H(+)(out). Core subunit of the mitochondrial membrane respiratory chain NADH dehydrogenase (Complex I) which catalyzes electron transfer from NADH through the respiratory chain, using ubiquinone as an electron acceptor. Essential for the catalytic activity of complex I. The chain is NADH-ubiquinone oxidoreductase chain 3 from Canis lupus familiaris (Dog).